The primary structure comprises 299 residues: Prohibitin-2 (299 aa).

Ala-2 bears the N-acetylalanine mark. The segment at 19–49 (MGTALKLLLGAGAVAYGIRESVFTVEGGHRA) is necessary for transcriptional repression. Tyr-128 carries the phosphotyrosine modification. Lys-147 carries the post-translational modification N6-acetyllysine. Residues 150-174 (ASQLITQRAQVSLLIRRELTERAKD) form a necessary for transcriptional repression region. Ser-151 carries the post-translational modification Phosphoserine. The stretch at 190–238 (SREYTAAVEAKQVAQQEAQRAQFLVEKAKQEQRQKIVQAEGEAEAARML) forms a coiled coil. N6-acetyllysine occurs at positions 200, 250, and 262.

The protein belongs to the prohibitin family. In terms of assembly, the mitochondrial prohibitin complex consists of two subunits (PHB1 and PHB2), assembled into a membrane-associated ring-shaped supercomplex of approximately 1 mDa. Interacts with ESR1, HDAC1 and HDAC5. Interacts with ZNF703. Interacts with STOML2. Interacts with ARFGEF3. Interacts with SPHK2. Interacts with COX4I1; the interaction associates PHB2 with COX. Interacts with MAP1LC3B (membrane-bound form LC3-II); the interaction is direct and upon mitochondrial depolarization and proteasome-dependent outer membrane rupture. Interacts with IGFBP6 (via C-terminal domain). Interacts with CLPB. Interacts with CD86 (via cytoplasmic domain); the interactions increases after priming with CD40. Interacts with AFG3L2. Interacts with DNAJC19. Interacts with AKT2; this interaction may be important for myogenic differentiation. Phosphorylated. Tyrosine phosphorylation is indirectly stimulated by IGFBP6.

Its subcellular location is the mitochondrion inner membrane. The protein resides in the cytoplasm. The protein localises to the nucleus. It localises to the cell membrane. Functionally, protein with pleiotropic attributes mediated in a cell-compartment- and tissue-specific manner, which include the plasma membrane-associated cell signaling functions, mitochondrial chaperone, and transcriptional co-regulator of transcription factors and sex steroid hormones in the nucleus. In the mitochondria, together with PHB, forms large ring complexes (prohibitin complexes) in the inner mitochondrial membrane (IMM) and functions as a chaperone protein that stabilizes mitochondrial respiratory enzymes and maintains mitochondrial integrity in the IMM, which is required for mitochondrial morphogenesis, neuronal survival, and normal lifespan. The prohibitin complex, with DNAJC19, regulates cardiolipin remodeling and the protein turnover of OMA1 in a cardiolipin-binding manner. Also regulates cytochrome-c oxidase assembly (COX) and mitochondrial respiration. Binding to sphingoid 1-phosphate (SPP) modulates its regulator activity. Has a key role of mitophagy receptor involved in targeting mitochondria for autophagic degradation. Involved in mitochondrial-mediated antiviral innate immunity, activates RIG-I-mediated signal transduction and production of IFNB1 and pro-inflammatory cytokine IL6. In terms of biological role, in the nucleus, serves as transcriptional co-regulator. Acts as a mediator of transcriptional repression by nuclear hormone receptors via recruitment of histone deacetylases. Functions as an estrogen receptor (ER)-selective coregulator that potentiates the inhibitory activities of antiestrogens and represses the activity of estrogens. Competes with NCOA1 for modulation of ER transcriptional activity. Its function is as follows. In the plasma membrane, is involved in IGFBP6-induced cell migration. Cooperates with CD86 to mediate CD86-signaling in B lymphocytes that regulates the level of IgG1 produced through the activation of distal signaling intermediates. Upon CD40 engagement, required to activate NF-kappa-B signaling pathway via phospholipase C and protein kinase C activation. The chain is Prohibitin-2 (PHB2) from Bos taurus (Bovine).